The primary structure comprises 592 residues: Pyruvate decarboxylase 3 (592 aa).

Positions 54 and 141 each coordinate substrate. The interval 419–501 (DSWFNCQKLK…FLINNGGYTI (83 aa)) is thiamine pyrophosphate binding. Asp-469, Asn-496, and Gly-498 together coordinate Mg(2+). Position 502 (Glu-502) interacts with substrate.

This sequence belongs to the TPP enzyme family. As to quaternary structure, homotetramer. The cofactor is a metal cation. Thiamine diphosphate serves as cofactor. In terms of tissue distribution, expressed at low levels in roots and shoots.

It carries out the reaction a 2-oxocarboxylate + H(+) = an aldehyde + CO2. The chain is Pyruvate decarboxylase 3 (PDC3) from Arabidopsis thaliana (Mouse-ear cress).